The sequence spans 489 residues: Rhamnulokinase (489 aa).

Residue 13 to 17 participates in ATP binding; sequence ASSGR. A disulfide bond links Cys-68 and Cys-222. Residues Gly-83 and 236–238 each bind substrate; that span reads HDT. Asp-237 acts as the Proton acceptor in catalysis. Thr-259 provides a ligand contact to ATP. Asn-296 serves as a coordination point for substrate. Position 304 (Gln-304) interacts with ATP. Cys-353 and Cys-370 are disulfide-bonded. Gly-402 is an ATP binding site. Cys-413 and Cys-417 are joined by a disulfide.

It belongs to the rhamnulokinase family. In terms of assembly, monomer. Mg(2+) serves as cofactor.

The catalysed reaction is L-rhamnulose + ATP = L-rhamnulose 1-phosphate + ADP + H(+). Its pathway is carbohydrate degradation; L-rhamnose degradation; glycerone phosphate from L-rhamnose: step 2/3. Its function is as follows. Involved in the catabolism of L-rhamnose (6-deoxy-L-mannose). Catalyzes the transfer of the gamma-phosphate group from ATP to the 1-hydroxyl group of L-rhamnulose to yield L-rhamnulose 1-phosphate. This chain is Rhamnulokinase, found in Escherichia coli O9:H4 (strain HS).